We begin with the raw amino-acid sequence, 138 residues long: Large ribosomal subunit protein uL16 (138 aa).

The protein belongs to the universal ribosomal protein uL16 family. Part of the 50S ribosomal subunit.

Functionally, binds 23S rRNA and is also seen to make contacts with the A and possibly P site tRNAs. The chain is Large ribosomal subunit protein uL16 from Rhodospirillum rubrum (strain ATCC 11170 / ATH 1.1.1 / DSM 467 / LMG 4362 / NCIMB 8255 / S1).